The chain runs to 276 residues: Small ribosomal subunit protein uS3 (276 aa).

A KH type-2 domain is found at 39–110 (IRRETMKFFK…KINIKIKEIK (72 aa)). The interval 218–243 (DAGQVINRKSSREKSEHFDRSRVDDR) is disordered. Residues 227-243 (SSREKSEHFDRSRVDDR) are compositionally biased toward basic and acidic residues.

It belongs to the universal ribosomal protein uS3 family. In terms of assembly, part of the 30S ribosomal subunit. Forms a tight complex with proteins S10 and S14.

Binds the lower part of the 30S subunit head. Binds mRNA in the 70S ribosome, positioning it for translation. The polypeptide is Small ribosomal subunit protein uS3 (Borrelia hermsii (strain HS1 / DAH)).